A 429-amino-acid polypeptide reads, in one-letter code: Alpha-galactosidase A (429 aa).

A signal peptide spans 1–31 (MQLRNPELHLGCALALRFLALVSWDIPGARA). 2 cysteine pairs are disulfide-bonded: cysteine 52-cysteine 94 and cysteine 56-cysteine 63. N-linked (GlcNAc...) asparagine glycosylation occurs at asparagine 139. Cysteine 142 and cysteine 172 are joined by a disulfide. Aspartate 170 (nucleophile) is an active-site residue. N-linked (GlcNAc...) asparagine glycosylation occurs at asparagine 192. Cysteine 202 and cysteine 223 form a disulfide bridge. Residue 203-207 (EWPLY) coordinates substrate. An N-linked (GlcNAc...) asparagine glycan is attached at asparagine 215. Aspartate 231 (proton donor) is an active-site residue. A disulfide bond links cysteine 378 and cysteine 382.

This sequence belongs to the glycosyl hydrolase 27 family. In terms of assembly, homodimer.

It localises to the lysosome. It carries out the reaction Hydrolysis of terminal, non-reducing alpha-D-galactose residues in alpha-D-galactosides, including galactose oligosaccharides, galactomannans and galactolipids.. The catalysed reaction is a globoside Gb3Cer (d18:1(4E)) + H2O = a beta-D-Gal-(1-&gt;4)-beta-D-Glc-(1&lt;-&gt;1)-Cer(d18:1(4E)) + D-galactose. It catalyses the reaction a globoside Gb3Cer + H2O = a beta-D-galactosyl-(1-&gt;4)-beta-D-glucosyl-(1&lt;-&gt;1)-ceramide + D-galactose. Galactosylgalactosylglucosylceramidase activity is stimulated by saposin B and ammonium chloride. Functionally, catalyzes the hydrolysis of glycosphingolipids and participates in their degradation in the lysosome. In Homo sapiens (Human), this protein is Alpha-galactosidase A.